Reading from the N-terminus, the 140-residue chain is Large ribosomal subunit protein uL14 (140 aa).

This sequence belongs to the universal ribosomal protein uL14 family.

This is Large ribosomal subunit protein uL14 (RpL23) from Drosophila melanogaster (Fruit fly).